A 430-amino-acid chain; its full sequence is Glutamate-1-semialdehyde 2,1-aminomutase (430 aa).

Residue Lys-267 is modified to N6-(pyridoxal phosphate)lysine.

The protein belongs to the class-III pyridoxal-phosphate-dependent aminotransferase family. HemL subfamily. Homodimer. Pyridoxal 5'-phosphate serves as cofactor.

The protein resides in the cytoplasm. The catalysed reaction is (S)-4-amino-5-oxopentanoate = 5-aminolevulinate. The protein operates within porphyrin-containing compound metabolism; protoporphyrin-IX biosynthesis; 5-aminolevulinate from L-glutamyl-tRNA(Glu): step 2/2. The sequence is that of Glutamate-1-semialdehyde 2,1-aminomutase from Natranaerobius thermophilus (strain ATCC BAA-1301 / DSM 18059 / JW/NM-WN-LF).